A 479-amino-acid chain; its full sequence is ATP synthase subunit beta (479 aa).

ATP is bound at residue 160–167 (GGAGVGKT).

This sequence belongs to the ATPase alpha/beta chains family. In terms of assembly, F-type ATPases have 2 components, CF(1) - the catalytic core - and CF(0) - the membrane proton channel. CF(1) has five subunits: alpha(3), beta(3), gamma(1), delta(1), epsilon(1). CF(0) has three main subunits: a(1), b(2) and c(9-12). The alpha and beta chains form an alternating ring which encloses part of the gamma chain. CF(1) is attached to CF(0) by a central stalk formed by the gamma and epsilon chains, while a peripheral stalk is formed by the delta and b chains.

The protein resides in the cell inner membrane. It catalyses the reaction ATP + H2O + 4 H(+)(in) = ADP + phosphate + 5 H(+)(out). Produces ATP from ADP in the presence of a proton gradient across the membrane. The catalytic sites are hosted primarily by the beta subunits. The protein is ATP synthase subunit beta of Anaplasma phagocytophilum (strain HZ).